Reading from the N-terminus, the 332-residue chain is tRNA dimethylallyltransferase 2 (332 aa).

15–22 (GPTASGKT) is an ATP binding site. 17 to 22 (TASGKT) contacts substrate. Interaction with substrate tRNA stretches follow at residues 40 to 43 (DSVM) and 164 to 168 (QRIQR).

This sequence belongs to the IPP transferase family. As to quaternary structure, monomer. It depends on Mg(2+) as a cofactor.

The catalysed reaction is adenosine(37) in tRNA + dimethylallyl diphosphate = N(6)-dimethylallyladenosine(37) in tRNA + diphosphate. Functionally, catalyzes the transfer of a dimethylallyl group onto the adenine at position 37 in tRNAs that read codons beginning with uridine, leading to the formation of N6-(dimethylallyl)adenosine (i(6)A). This chain is tRNA dimethylallyltransferase 2, found in Hahella chejuensis (strain KCTC 2396).